The primary structure comprises 569 residues: uncharacterized protein (569 aa).

The signal sequence occupies residues 1–22 (MSLLVKAALILKCASMLQGVSA). Residues 498–541 (RETSILDSTNTTSTNATNTTTTTSSSSTASSSASASSSTSATSG) are disordered. A compositionally biased stretch (low complexity) spans 505-540 (STNTTSTNATNTTTTTSSSSTASSSASASSSTSATS).

Its subcellular location is the secreted. It is found in the cell surface. This is an uncharacterized protein from Schizosaccharomyces pombe (strain 972 / ATCC 24843) (Fission yeast).